The primary structure comprises 156 residues: Probable cyclic pyranopterin monophosphate synthase (156 aa).

Residue 109–110 (MD) coordinates substrate. Aspartate 124 is a catalytic residue.

It belongs to the MoaC family. Homohexamer; trimer of dimers.

The catalysed reaction is (8S)-3',8-cyclo-7,8-dihydroguanosine 5'-triphosphate = cyclic pyranopterin phosphate + diphosphate. It functions in the pathway cofactor biosynthesis; molybdopterin biosynthesis. Its function is as follows. Catalyzes the conversion of (8S)-3',8-cyclo-7,8-dihydroguanosine 5'-triphosphate to cyclic pyranopterin monophosphate (cPMP). This Methanopyrus kandleri (strain AV19 / DSM 6324 / JCM 9639 / NBRC 100938) protein is Probable cyclic pyranopterin monophosphate synthase.